The sequence spans 353 residues: Photosystem II protein D1 (353 aa).

T2 carries the post-translational modification N-acetylthreonine. T2 carries the phosphothreonine modification. The next 3 helical transmembrane spans lie at 29–46 (YIGW…TATS), 118–133 (HFLL…EWEL), and 142–156 (WIAV…AAAA). H118 provides a ligand contact to chlorophyll a. Residue Y126 participates in pheophytin a binding. The [CaMn4O5] cluster site is built by D170 and E189. The chain crosses the membrane as a helical span at residues 197 to 218 (FHMLGVAGVFGGSLFSAMHGSL). H198 is a chlorophyll a binding site. Residues H215 and 264–265 (SF) each bind a quinone. Position 215 (H215) interacts with Fe cation. H272 contributes to the Fe cation binding site. The helical transmembrane segment at 274–288 (FLAAWPVVGIWFTAL) threads the bilayer. H332, E333, D342, and A344 together coordinate [CaMn4O5] cluster. A propeptide spanning residues 345–353 (SVDAPSING) is cleaved from the precursor.

The protein belongs to the reaction center PufL/M/PsbA/D family. PSII is composed of 1 copy each of membrane proteins PsbA, PsbB, PsbC, PsbD, PsbE, PsbF, PsbH, PsbI, PsbJ, PsbK, PsbL, PsbM, PsbT, PsbX, PsbY, PsbZ, Psb30/Ycf12, at least 3 peripheral proteins of the oxygen-evolving complex and a large number of cofactors. It forms dimeric complexes. It depends on The D1/D2 heterodimer binds P680, chlorophylls that are the primary electron donor of PSII, and subsequent electron acceptors. It shares a non-heme iron and each subunit binds pheophytin, quinone, additional chlorophylls, carotenoids and lipids. D1 provides most of the ligands for the Mn4-Ca-O5 cluster of the oxygen-evolving complex (OEC). There is also a Cl(-1) ion associated with D1 and D2, which is required for oxygen evolution. The PSII complex binds additional chlorophylls, carotenoids and specific lipids. as a cofactor. In terms of processing, tyr-161 forms a radical intermediate that is referred to as redox-active TyrZ, YZ or Y-Z. C-terminally processed by CTPA; processing is essential to allow assembly of the oxygen-evolving complex and thus photosynthetic growth.

It localises to the plastid. The protein localises to the chloroplast thylakoid membrane. It catalyses the reaction 2 a plastoquinone + 4 hnu + 2 H2O = 2 a plastoquinol + O2. Its function is as follows. Photosystem II (PSII) is a light-driven water:plastoquinone oxidoreductase that uses light energy to abstract electrons from H(2)O, generating O(2) and a proton gradient subsequently used for ATP formation. It consists of a core antenna complex that captures photons, and an electron transfer chain that converts photonic excitation into a charge separation. The D1/D2 (PsbA/PsbD) reaction center heterodimer binds P680, the primary electron donor of PSII as well as several subsequent electron acceptors. The chain is Photosystem II protein D1 from Adiantum capillus-veneris (Maidenhair fern).